Here is a 255-residue protein sequence, read N- to C-terminus: Indole-3-glycerol phosphate synthase (255 aa).

This sequence belongs to the TrpC family.

The catalysed reaction is 1-(2-carboxyphenylamino)-1-deoxy-D-ribulose 5-phosphate + H(+) = (1S,2R)-1-C-(indol-3-yl)glycerol 3-phosphate + CO2 + H2O. The protein operates within amino-acid biosynthesis; L-tryptophan biosynthesis; L-tryptophan from chorismate: step 4/5. In Streptococcus thermophilus (strain ATCC BAA-250 / LMG 18311), this protein is Indole-3-glycerol phosphate synthase.